The primary structure comprises 181 residues: Ferritin BfrB (181 aa).

One can recognise a Ferritin-like diiron domain in the interval 15–150; that stretch reads MQEQIHNEFT…TLVRVADRAG (136 aa). Fe cation contacts are provided by E22, E55, H58, E99, and Q132.

It belongs to the ferritin family. Prokaryotic subfamily. In terms of assembly, homooligomer of 24 subunits that are packed together to form an approximately spherical molecule with a central cavity, in which large amounts of iron can be stored.

The enzyme catalyses 4 Fe(2+) + O2 + 4 H(+) = 4 Fe(3+) + 2 H2O. In terms of biological role, iron-storage protein that displays ferroxidase activity, catalyzing the oxidation of Fe(2+) ions into Fe(3+) ions, that can then be deposited as a ferric-oxide mineral core within the central cavity of the protein complex. This Mycobacterium tuberculosis (strain ATCC 35801 / TMC 107 / Erdman) protein is Ferritin BfrB (bfrB).